Reading from the N-terminus, the 594-residue chain is Probable translation initiation factor IF-2 (594 aa).

The tr-type G domain occupies 5 to 224 (YRAPIVVVVG…LMAGLTQRLV (220 aa)). Residues 14–21 (GHVDVGKT) form a G1 region. GTP is bound at residue 14 to 21 (GHVDVGKT). The G2 stretch occupies residues 39-43 (MITQH). The segment at 80-83 (DTPG) is G3. GTP contacts are provided by residues 80 to 84 (DTPGH) and 134 to 137 (NKVD). The tract at residues 134–137 (NKVD) is G4. The interval 202 to 204 (SAV) is G5.

The protein belongs to the TRAFAC class translation factor GTPase superfamily. Classic translation factor GTPase family. IF-2 subfamily.

Its function is as follows. Function in general translation initiation by promoting the binding of the formylmethionine-tRNA to ribosomes. Seems to function along with eIF-2. The sequence is that of Probable translation initiation factor IF-2 from Caldivirga maquilingensis (strain ATCC 700844 / DSM 13496 / JCM 10307 / IC-167).